Reading from the N-terminus, the 428-residue chain is Light-independent protochlorophyllide reductase subunit N (428 aa).

Cys-29, Cys-54, and Cys-115 together coordinate [4Fe-4S] cluster.

It belongs to the BchN/ChlN family. Protochlorophyllide reductase is composed of three subunits; BchL, BchN and BchB. Forms a heterotetramer of two BchB and two BchN subunits. The cofactor is [4Fe-4S] cluster.

The enzyme catalyses chlorophyllide a + oxidized 2[4Fe-4S]-[ferredoxin] + 2 ADP + 2 phosphate = protochlorophyllide a + reduced 2[4Fe-4S]-[ferredoxin] + 2 ATP + 2 H2O. The protein operates within porphyrin-containing compound metabolism; bacteriochlorophyll biosynthesis (light-independent). Its function is as follows. Component of the dark-operative protochlorophyllide reductase (DPOR) that uses Mg-ATP and reduced ferredoxin to reduce ring D of protochlorophyllide (Pchlide) to form chlorophyllide a (Chlide). This reaction is light-independent. The NB-protein (BchN-BchB) is the catalytic component of the complex. In Cereibacter sphaeroides (strain ATCC 17025 / ATH 2.4.3) (Rhodobacter sphaeroides), this protein is Light-independent protochlorophyllide reductase subunit N.